The sequence spans 131 residues: Phosphoribosyl-ATP pyrophosphatase 2 (131 aa).

The interval 105–131 is disordered; that stretch reads RIGKPAAPHATRRPVIPQEARAVRKHR.

It belongs to the PRA-PH family.

It is found in the cytoplasm. The catalysed reaction is 1-(5-phospho-beta-D-ribosyl)-ATP + H2O = 1-(5-phospho-beta-D-ribosyl)-5'-AMP + diphosphate + H(+). Its pathway is amino-acid biosynthesis; L-histidine biosynthesis; L-histidine from 5-phospho-alpha-D-ribose 1-diphosphate: step 2/9. This chain is Phosphoribosyl-ATP pyrophosphatase 2 (hisE2), found in Rhodopseudomonas palustris (strain ATCC BAA-98 / CGA009).